A 227-amino-acid polypeptide reads, in one-letter code: UPF0659 protein YMR090W (227 aa).

This sequence belongs to the UPF0659 family.

The protein resides in the cytoplasm. The chain is UPF0659 protein YMR090W from Saccharomyces cerevisiae (strain ATCC 204508 / S288c) (Baker's yeast).